The sequence spans 305 residues: Ribosomal RNA large subunit methyltransferase F (305 aa).

Belongs to the methyltransferase superfamily. METTL16/RlmF family.

Its subcellular location is the cytoplasm. The catalysed reaction is adenosine(1618) in 23S rRNA + S-adenosyl-L-methionine = N(6)-methyladenosine(1618) in 23S rRNA + S-adenosyl-L-homocysteine + H(+). Functionally, specifically methylates the adenine in position 1618 of 23S rRNA. The sequence is that of Ribosomal RNA large subunit methyltransferase F from Enterobacter sp. (strain 638).